Here is a 661-residue protein sequence, read N- to C-terminus: Bifunctional polymyxin resistance protein ArnA (661 aa).

The formyltransferase ArnAFT stretch occupies residues 1–304 (MKAVVFAYHD…ALGLVSGAVI (304 aa)). Catalysis depends on His104, which acts as the Proton donor; for formyltransferase activity. (6R)-10-formyltetrahydrofolate-binding positions include Arg114 and 136 to 140 (VNRAD). The dehydrogenase ArnADH stretch occupies residues 314–661 (RRTRVLILGV…TVELVDDKNP (348 aa)). Residues Asp347 and 368–369 (DI) contribute to the NAD(+) site. UDP-alpha-D-glucuronate is bound by residues Ala393, Tyr398, and 432-433 (TS). Glu434 functions as the Proton acceptor; for decarboxylase activity in the catalytic mechanism. UDP-alpha-D-glucuronate contacts are provided by residues Arg460, Asn492, 526–535 (KLIEGGKQKR), and Tyr613. Residue Arg619 is the Proton donor; for decarboxylase activity of the active site.

This sequence in the N-terminal section; belongs to the Fmt family. UDP-L-Ara4N formyltransferase subfamily. In the C-terminal section; belongs to the NAD(P)-dependent epimerase/dehydratase family. UDP-glucuronic acid decarboxylase subfamily. As to quaternary structure, homohexamer, formed by a dimer of trimers.

The enzyme catalyses UDP-alpha-D-glucuronate + NAD(+) = UDP-beta-L-threo-pentopyranos-4-ulose + CO2 + NADH. It carries out the reaction UDP-4-amino-4-deoxy-beta-L-arabinose + (6R)-10-formyltetrahydrofolate = UDP-4-deoxy-4-formamido-beta-L-arabinose + (6S)-5,6,7,8-tetrahydrofolate + H(+). The protein operates within nucleotide-sugar biosynthesis; UDP-4-deoxy-4-formamido-beta-L-arabinose biosynthesis; UDP-4-deoxy-4-formamido-beta-L-arabinose from UDP-alpha-D-glucuronate: step 1/3. It participates in nucleotide-sugar biosynthesis; UDP-4-deoxy-4-formamido-beta-L-arabinose biosynthesis; UDP-4-deoxy-4-formamido-beta-L-arabinose from UDP-alpha-D-glucuronate: step 3/3. It functions in the pathway bacterial outer membrane biogenesis; lipopolysaccharide biosynthesis. In terms of biological role, bifunctional enzyme that catalyzes the oxidative decarboxylation of UDP-glucuronic acid (UDP-GlcUA) to UDP-4-keto-arabinose (UDP-Ara4O) and the addition of a formyl group to UDP-4-amino-4-deoxy-L-arabinose (UDP-L-Ara4N) to form UDP-L-4-formamido-arabinose (UDP-L-Ara4FN). The modified arabinose is attached to lipid A and is required for resistance to polymyxin and cationic antimicrobial peptides. The protein is Bifunctional polymyxin resistance protein ArnA of Klebsiella pneumoniae subsp. pneumoniae (strain ATCC 700721 / MGH 78578).